Consider the following 90-residue polypeptide: Auxin-responsive protein SAUR23 (90 aa).

This sequence belongs to the ARG7 family.

The protein resides in the cell membrane. Functions as a positive effector of cell expansion through modulation of auxin transport. This chain is Auxin-responsive protein SAUR23, found in Arabidopsis thaliana (Mouse-ear cress).